The primary structure comprises 554 residues: Malate synthase 1 (554 aa).

Arg177 acts as the Proton acceptor in catalysis. Asp457 acts as the Proton donor in catalysis. Residues 552-554 (SKL) carry the SKL peroxisome targeting motif motif.

Belongs to the malate synthase family. As to quaternary structure, interacts with PEX9.

It localises to the peroxisome matrix. It catalyses the reaction glyoxylate + acetyl-CoA + H2O = (S)-malate + CoA + H(+). It participates in carbohydrate metabolism; glyoxylate cycle; (S)-malate from isocitrate: step 2/2. Functionally, malate synthase which takes part in the glyoxylate cycle. MLS1 activity is essential for cells to grow on oleic acid as a sole carbon source. Two steps of the glyoxylate cycle take place in the cytosol, the splitting of isocitrate into succinate and glyoxylate, and the dehydrogenation of malate to oxaloacetate. However, the formation of malate from glyoxylate and acetyl-CoA undertaken MLS1, occurs in the peroxisomes when cells are grown on oleic acid. The source of acetyl-CoA being either peroxisomal when breaking down fatty acids, or cytosolic when extra-cellular two-carbon substrates are used, therefore, although not strictly essential, the peroxisomal localization of MLS1 appears to be advantageous for cells growing on oleic acid, in that acetyl-CoA production and utilization are thereby intimately compartmentalized together to increase efficiency. The protein is Malate synthase 1 of Saccharomyces cerevisiae (strain YJM789) (Baker's yeast).